The following is an 88-amino-acid chain: UPF0297 protein SAK_2030 (88 aa).

The protein belongs to the UPF0297 family.

This Streptococcus agalactiae serotype Ia (strain ATCC 27591 / A909 / CDC SS700) protein is UPF0297 protein SAK_2030.